The sequence spans 342 residues: tRNA N6-adenosine threonylcarbamoyltransferase (342 aa).

Residues histidine 111 and histidine 115 each coordinate Fe cation. Substrate-binding positions include leucine 134–glycine 138, aspartate 167, glycine 180, aspartate 184, and asparagine 273. Aspartate 298 is a binding site for Fe cation.

This sequence belongs to the KAE1 / TsaD family. Fe(2+) is required as a cofactor.

The protein localises to the cytoplasm. It carries out the reaction L-threonylcarbamoyladenylate + adenosine(37) in tRNA = N(6)-L-threonylcarbamoyladenosine(37) in tRNA + AMP + H(+). Required for the formation of a threonylcarbamoyl group on adenosine at position 37 (t(6)A37) in tRNAs that read codons beginning with adenine. Is involved in the transfer of the threonylcarbamoyl moiety of threonylcarbamoyl-AMP (TC-AMP) to the N6 group of A37, together with TsaE and TsaB. TsaD likely plays a direct catalytic role in this reaction. The chain is tRNA N6-adenosine threonylcarbamoyltransferase from Gloeobacter violaceus (strain ATCC 29082 / PCC 7421).